Consider the following 73-residue polypeptide: Translation initiation factor IF-1 (73 aa).

Residues 1–73 (MGKKEEAFEV…TKGRIVYRER (73 aa)) form the S1-like domain.

The protein belongs to the IF-1 family. As to quaternary structure, component of the 30S ribosomal translation pre-initiation complex which assembles on the 30S ribosome in the order IF-2 and IF-3, IF-1 and N-formylmethionyl-tRNA(fMet); mRNA recruitment can occur at any time during PIC assembly.

The protein localises to the cytoplasm. In terms of biological role, one of the essential components for the initiation of protein synthesis. Stabilizes the binding of IF-2 and IF-3 on the 30S subunit to which N-formylmethionyl-tRNA(fMet) subsequently binds. Helps modulate mRNA selection, yielding the 30S pre-initiation complex (PIC). Upon addition of the 50S ribosomal subunit IF-1, IF-2 and IF-3 are released leaving the mature 70S translation initiation complex. The chain is Translation initiation factor IF-1 from Rhodopirellula baltica (strain DSM 10527 / NCIMB 13988 / SH1).